A 74-amino-acid chain; its full sequence is Translation initiation factor IF-1 (74 aa).

The S1-like domain maps to 1-72; the sequence is MSKQDLIEME…TKGRITYRLR (72 aa).

It belongs to the IF-1 family. In terms of assembly, component of the 30S ribosomal translation pre-initiation complex which assembles on the 30S ribosome in the order IF-2 and IF-3, IF-1 and N-formylmethionyl-tRNA(fMet); mRNA recruitment can occur at any time during PIC assembly.

Its subcellular location is the cytoplasm. Its function is as follows. One of the essential components for the initiation of protein synthesis. Stabilizes the binding of IF-2 and IF-3 on the 30S subunit to which N-formylmethionyl-tRNA(fMet) subsequently binds. Helps modulate mRNA selection, yielding the 30S pre-initiation complex (PIC). Upon addition of the 50S ribosomal subunit IF-1, IF-2 and IF-3 are released leaving the mature 70S translation initiation complex. The chain is Translation initiation factor IF-1 from Trichodesmium erythraeum (strain IMS101).